The chain runs to 66 residues: Large ribosomal subunit protein bL31 (66 aa).

Zn(2+) is bound by residues Cys16, Cys18, Cys36, and Cys39.

It belongs to the bacterial ribosomal protein bL31 family. Type A subfamily. In terms of assembly, part of the 50S ribosomal subunit. The cofactor is Zn(2+).

Its function is as follows. Binds the 23S rRNA. This chain is Large ribosomal subunit protein bL31, found in Geobacillus sp. (strain WCH70).